A 236-amino-acid chain; its full sequence is Growth-regulating factor 12 (236 aa).

The segment at 1-27 (MLAEGRQVYLPPPPPSKLPRLSGTDPT) is disordered. The QLQ domain occupies 74-109 (ALTFMQRQELEQQVLIYRYFAAGAPVPVHLVLPIWK). The WRC domain occupies 140-184 (EPEPGRCRRTDGKKWRCSRDVVPGHKYCERHVHRGRGRSRKPMEA). 2 short sequence motifs (bipartite nuclear localization signal) span residues 145-155 (RCRRTDGKKWR) and 173-180 (RGRGRSRK).

The protein belongs to the GRF family.

The protein resides in the nucleus. Functionally, transcription activator that plays a regulatory role in gibberellin-induced stem elongation. In Oryza sativa subsp. japonica (Rice), this protein is Growth-regulating factor 12 (GRF12).